Here is a 92-residue protein sequence, read N- to C-terminus: RNA-binding protein Hfq (92 aa).

Residues 9–68 (DPFLNALRRERVPVSVYLVNGIKLQGTIESFDQFVVLLRNTVSQMVYKHAISTVVPARNV) form the Sm domain.

This sequence belongs to the Hfq family. In terms of assembly, homohexamer.

In terms of biological role, RNA chaperone that binds small regulatory RNA (sRNAs) and mRNAs to facilitate mRNA translational regulation in response to envelope stress, environmental stress and changes in metabolite concentrations. Also binds with high specificity to tRNAs. This chain is RNA-binding protein Hfq, found in Xylella fastidiosa (strain M12).